We begin with the raw amino-acid sequence, 98 residues long: Large ribosomal subunit protein uL23 (98 aa).

It belongs to the universal ribosomal protein uL23 family. Part of the 50S ribosomal subunit. Contacts protein L29, and trigger factor when it is bound to the ribosome.

Functionally, one of the early assembly proteins it binds 23S rRNA. One of the proteins that surrounds the polypeptide exit tunnel on the outside of the ribosome. Forms the main docking site for trigger factor binding to the ribosome. The sequence is that of Large ribosomal subunit protein uL23 from Rickettsia rickettsii (strain Iowa).